Here is a 239-residue protein sequence, read N- to C-terminus: MICOS complex subunit mic25a (239 aa).

Residue Gly-2 is the site of N-myristoyl glycine attachment. 2 disordered regions span residues Val-27–Tyr-88 and Asp-113–Lys-133. A compositionally biased stretch (polar residues) spans Asn-50–Pro-78. A compositionally biased stretch (basic and acidic residues) spans Asp-79 to Tyr-88. Residues Asp-79–Glu-166 adopt a coiled-coil conformation. The region spanning Glu-192–Leu-234 is the CHCH domain. Short sequence motifs (cx9C motif) lie at residues Cys-195 to Cys-205 and Cys-216 to Cys-226. 2 disulfides stabilise this stretch: Cys-195/Cys-226 and Cys-205/Cys-216.

This sequence belongs to the MICOS complex subunit Mic19 family. Metazoan Mic25 subfamily. In terms of assembly, component of the mitochondrial contact site and cristae organizing system (MICOS) complex (also known as MINOS or MitOS complex).

The protein localises to the mitochondrion inner membrane. Component of the MICOS complex, a large protein complex of the mitochondrial inner membrane that plays crucial roles in the maintenance of crista junctions, inner membrane architecture, and formation of contact sites to the outer membrane. The polypeptide is MICOS complex subunit mic25a (chchd6a) (Danio rerio (Zebrafish)).